The sequence spans 369 residues: 4-hydroxy-3-methylbut-2-en-1-yl diphosphate synthase (flavodoxin) (369 aa).

[4Fe-4S] cluster is bound by residues cysteine 270, cysteine 273, cysteine 305, and glutamate 312.

The protein belongs to the IspG family. It depends on [4Fe-4S] cluster as a cofactor.

The enzyme catalyses (2E)-4-hydroxy-3-methylbut-2-enyl diphosphate + oxidized [flavodoxin] + H2O + 2 H(+) = 2-C-methyl-D-erythritol 2,4-cyclic diphosphate + reduced [flavodoxin]. Its pathway is isoprenoid biosynthesis; isopentenyl diphosphate biosynthesis via DXP pathway; isopentenyl diphosphate from 1-deoxy-D-xylulose 5-phosphate: step 5/6. In terms of biological role, converts 2C-methyl-D-erythritol 2,4-cyclodiphosphate (ME-2,4cPP) into 1-hydroxy-2-methyl-2-(E)-butenyl 4-diphosphate. The chain is 4-hydroxy-3-methylbut-2-en-1-yl diphosphate synthase (flavodoxin) from Pseudomonas putida (strain ATCC 700007 / DSM 6899 / JCM 31910 / BCRC 17059 / LMG 24140 / F1).